Here is a 210-residue protein sequence, read N- to C-terminus: Large ribosomal subunit protein uL4 (210 aa).

Part of the 50S ribosomal subunit. In terms of processing, the N-terminus is blocked.

In terms of biological role, one of the primary rRNA binding proteins, this protein initially binds near the 5'-end of the 23S rRNA. It is important during the early stages of 50S assembly. It makes multiple contacts with different domains of the 23S rRNA in the assembled 50S subunit and ribosome. Its function is as follows. Forms part of the polypeptide exit tunnel. This protein can be incorporated into E.coli ribosomes in vivo, which resulted in decreased peptidyltransferase (Ptase) activity of the hybrid ribosomes. The hybrid 50S subunits associate less well with 30S subunits to form the ribosome. The protein is Large ribosomal subunit protein uL4 (rplD) of Thermus thermophilus (strain ATCC 27634 / DSM 579 / HB8).